The following is a 590-amino-acid chain: Polypeptide N-acetylgalactosaminyltransferase 8 (590 aa).

Residues 1–11 lie on the Cytoplasmic side of the membrane; sequence MCLDIWRHKKK. A helical; Signal-anchor for type II membrane protein membrane pass occupies residues 12-31; it reads VLPLLLLMAIGSIIYYLYTL. Residues 32–590 lie on the Lumenal side of the membrane; sequence KLEGERDESA…QHFWDNVKTQ (559 aa). N-linked (GlcNAc...) asparagine glycosylation is present at asparagine 77. 5 disulfide bridges follow: cysteine 117/cysteine 345, cysteine 336/cysteine 419, cysteine 459/cysteine 475, cysteine 502/cysteine 517, and cysteine 546/cysteine 561. The segment at 127 to 236 is catalytic subdomain A; sequence LPSVSVVITY…KGWLEPLIAP (110 aa). Aspartate 168 provides a ligand contact to substrate. Aspartate 220 provides a ligand contact to Mn(2+). A substrate-binding site is contributed by serine 221. A Mn(2+)-binding site is contributed by histidine 222. A glycan (N-linked (GlcNAc...) asparagine) is linked at asparagine 241. The catalytic subdomain B stretch occupies residues 291 to 353; it reads PHKNPIMNGG…PCSRVGHLFR (63 aa). A substrate-binding site is contributed by tryptophan 322. Histidine 350 is a Mn(2+) binding site. Residue arginine 353 coordinates substrate. The 128-residue stretch at 446-573 folds into the Ricin B-type lectin domain; sequence ASGVLQSISS…KNHKQQWKFG (128 aa).

Belongs to the glycosyltransferase 2 family. GalNAc-T subfamily. The cofactor is Mn(2+). Expressed in developing oocytes and egg chambers. During embryonic stages 9-11, expressed in the primordium of the foregut, midgut and hindgut. During embryonic stages 12-13, expressed in the posterior midgut and hindgut. During embryonic stages 14-15, expression continues in the hindgut. No expression detected during embryonic stages 16-17 or in third instar larvae imaginal disks.

Its subcellular location is the golgi apparatus membrane. The catalysed reaction is L-seryl-[protein] + UDP-N-acetyl-alpha-D-galactosamine = a 3-O-[N-acetyl-alpha-D-galactosaminyl]-L-seryl-[protein] + UDP + H(+). It carries out the reaction L-threonyl-[protein] + UDP-N-acetyl-alpha-D-galactosamine = a 3-O-[N-acetyl-alpha-D-galactosaminyl]-L-threonyl-[protein] + UDP + H(+). Its pathway is protein modification; protein glycosylation. Catalyzes the initial reaction in O-linked oligosaccharide biosynthesis, the transfer of an N-acetyl-D-galactosamine residue to a serine or threonine residue on the protein receptor. It can both act as a peptide transferase that transfers GalNAc onto unmodified peptide substrates, and as a glycopeptide transferase that requires the prior addition of a GalNAc on a peptide before adding additional GalNAc moieties. Prefers both EA2 and the diglycosylated Muc5AC-3/13 as substrates, albeit at very low levels fro Muc5AC-3/13. In Drosophila melanogaster (Fruit fly), this protein is Polypeptide N-acetylgalactosaminyltransferase 8.